A 449-amino-acid polypeptide reads, in one-letter code: Wilms tumor protein homolog (449 aa).

The tract at residues 48 to 84 (YGSLGGPAPPPAPPPPPPPPPHSFIKQEPSWGGAEPH) is disordered. Positions 54–69 (PAPPPAPPPPPPPPPH) are enriched in pro residues. Residues Lys73 and Lys177 each participate in a glycyl lysine isopeptide (Lys-Gly) (interchain with G-Cter in SUMO) cross-link. Residues 236-244 (MTWNQMNLG) carry the 9aaTAD motif. C2H2-type zinc fingers lie at residues 323–347 (FMCA…SRKH), 353–377 (YQCD…QRRH), and 383–405 (FQCK…TRTH). 2 important for interaction with target DNA regions span residues 367 to 381 (SDQL…TGVK) and 393 to 401 (SRSDHLKTH). Residues 408 to 410 (KTS) carry the KTS motif motif. The segment at 414–438 (FSCRWPSCQKKFARSDELVRHHNMH) adopts a C2H2-type 4 zinc-finger fold. Residue Lys444 forms a Glycyl lysine isopeptide (Lys-Gly) (interchain with G-Cter in SUMO2) linkage.

This sequence belongs to the EGR C2H2-type zinc-finger protein family. As to quaternary structure, interacts with ZNF224 via the zinc-finger region. Interacts with WTAP, AMER1 and SRY. Homodimer. Interacts with WTIP. Interacts with actively translating polysomes. Detected in nuclear ribonucleoprotein (mRNP) particles. Interacts with U2AF2. Interacts with HNRNPU via the zinc-finger region. Interacts with CITED2. Interacts with RBM4.

The protein resides in the nucleus speckle. Its subcellular location is the nucleus. It is found in the nucleoplasm. The protein localises to the nucleolus. It localises to the cytoplasm. In terms of biological role, transcription factor that plays an important role in cellular development and cell survival. Recognizes and binds to the DNA sequence 5'-GCG(T/G)GGGCG-3'. Regulates the expression of numerous target genes, including EPO. Plays an essential role for development of the urogenital system. It has a tumor suppressor as well as an oncogenic role in tumor formation. Function may be isoform-specific: isoforms lacking the KTS motif may act as transcription factors. Isoforms containing the KTS motif may bind mRNA and play a role in mRNA metabolism or splicing. Isoform 1 has lower affinity for DNA, and can bind RNA. The sequence is that of Wilms tumor protein homolog (WT1) from Sus scrofa (Pig).